The primary structure comprises 1091 residues: MKLLYTDIRTSLTEILTREAEELVAAGKRVFYIAPNSLSFEKERAVLECLSQQASFSITVTRFAQMARYLVLNDLPVKTTLDDIGLGLAFYKCLAELDPKDLRVYGAIKQDPQLIQQLIELYHEMTKSQMSFLDLENLTDEDKRTDLLLIFEKVTAYLNQGQLAQGSQLSHLIEAIENDKVSSDFNQITLVIDGFTRFSAEEERVVDLLHGKGVEIVIGAYASKKAYTSPFSEGNLYQASVKFLHHLASKYQTPAQDCSQTHEKMDSFDKASRLLESSYDFSELALDVDEKDRENLQIWSCLTQKEELELVARSIRQKLHENSDLSYKHFRILLGDVASYQLSLKTIFDQYQIPFYLGRSEAMAHHPLTQFVESILALKRYRFRQEDLINLLRTDLYTDLSQSDIDAFEQYIRYLGINGLPAFQQIFTKSHHGKFNLERLNVLRLRILAPLETLFASRKQKAENLLQKWSVFLKEGAVTKQLQDLTTTLEAVEQERQAEVWKAFCHVLEQFATVFAGSQVSLEDFLALLHSGMSLSQYRTIPATVDTVLVQSYDLIAPLTADFVYAIGLTQDNLPKISQNTSLLTDEERQNLNQATEEGVQLLIASSENLKKNRYTMLSLVNSARKQLFLSAPSLFNESESKESAYLQELIHFGFRRREKRMNHKGLSKEDMGSYHSLLSSLVAYHQQGEMSDTEQDLTFVKVLSRVIGKKLDLQGLENPAIPTSPSSKTLAKDTLQALYPAKQEFYLSTSGLTEFYRNEYSYFLRYVLGLQEELRLRPDARSHGNFLHRIFERALQLPNEDSFDQRLEQAIQETSQEREFEAIYQESLEAQFTKEVLLDVARTTGHILRHNPAIETIKEEANFGGKDQAFIQLDNGRSVFVRGKVDRIDRLKANGAIGVVDYKSSLTQFQFPHFFNGLNSQLPTYLAALKREGEQNFFGAMYLEMAEPVQSLMAVKSLAGAVVEASKSMKYQGLFLEKESSYLGEFYNKNKANQLTDEEFQLLLDYNAYLYKKAAEKILAGRFAINPYTENGRSIAPYVQQHQAITGFEANYHLGQARFLEKLDLADGKRLVGEKLKQAWFEKIREELNR.

It belongs to the helicase family. AddB/RexB type 2 subfamily. As to quaternary structure, heterodimer of AddA and RexB. Mg(2+) serves as cofactor.

Its function is as follows. The heterodimer acts as both an ATP-dependent DNA helicase and an ATP-dependent, dual-direction single-stranded exonuclease. Recognizes the chi site generating a DNA molecule suitable for the initiation of homologous recombination. This subunit has 5' -&gt; 3' nuclease activity but not helicase activity. This Streptococcus pneumoniae serotype 19F (strain G54) protein is ATP-dependent helicase/deoxyribonuclease subunit B.